The primary structure comprises 205 residues: Putative STAG3-like protein 1 (205 aa).

Residues 10 to 95 (PKVTCRDVLP…GRFKDWMVSM (86 aa)) enclose the SCD domain.

Belongs to the SCC3 family.

It localises to the nucleus. In Homo sapiens (Human), this protein is Putative STAG3-like protein 1 (STAG3L1).